Consider the following 570-residue polypeptide: Aspartyl aminopeptidase (570 aa).

Histidine 86 provides a ligand contact to Zn(2+). A substrate-binding site is contributed by histidine 160. Residue aspartate 324 participates in Zn(2+) binding. Position 379 (glutamate 379) interacts with substrate. Positions 380 and 434 each coordinate Zn(2+). Positions 434, 437, 462, and 469 each coordinate substrate. Position 534 (histidine 534) interacts with Zn(2+).

It belongs to the peptidase M18 family. As to quaternary structure, homododecamer composed of homodimers and homotrimers that assemble into a tetrahedron shape to create a central tunnel containing the active sites. Homooctamer. Requires Zn(2+) as cofactor.

It localises to the cytoplasm. It carries out the reaction Release of an N-terminal aspartate or glutamate from a peptide, with a preference for aspartate.. Its activity is regulated as follows. Activated by Co(2+). Inhibited by high concentrations (&gt;1mM) of Zn(2+). Aminopeptidase which specifically catalyzes the removal of glutamic acid or aspartic acid residues from the N-terminus of peptides. May play a role in the final step of host hemoglobin catabolism, by cleaving hemoglobin-derived oligopeptides in the cytoplasm. The chain is Aspartyl aminopeptidase from Plasmodium falciparum (isolate 3D7).